Reading from the N-terminus, the 367-residue chain is MISSAPLILLAAGGTGGHLFPAEALGVELIKRGYRVRLVTDARALKYSGLFTKDMIDVVPSETVRSRSPVALARTALLLGTGTLAAFNLMRRLKPAAVIGFGGYPTVPPLLAARLAGVPSLIHDANAVLGRANRFLSAHVKAIATSLPGVLDRDPALAGKTTTVGTPMRPAILEAAAVPYVAPETAGPLRLLVVGGSQGARVMSDIVPGAIERLEPALWSRLVLAQQVRQEDMARVRAVYDRLKINAELQPFFTDLPARLAANHLVISRSGAGTVAELAAIGRPSILVPLPGAIDQDQFANAGVLSDANAAIRIVQTAFTSDRLASEISSLAAEPTRLAAMAQAARAAGRLDAAERLADLVAKTAGL.

UDP-N-acetyl-alpha-D-glucosamine-binding positions include threonine 15 to glycine 17, asparagine 126, arginine 169, serine 197, and glutamine 298.

The protein belongs to the glycosyltransferase 28 family. MurG subfamily.

It localises to the cell inner membrane. It carries out the reaction di-trans,octa-cis-undecaprenyl diphospho-N-acetyl-alpha-D-muramoyl-L-alanyl-D-glutamyl-meso-2,6-diaminopimeloyl-D-alanyl-D-alanine + UDP-N-acetyl-alpha-D-glucosamine = di-trans,octa-cis-undecaprenyl diphospho-[N-acetyl-alpha-D-glucosaminyl-(1-&gt;4)]-N-acetyl-alpha-D-muramoyl-L-alanyl-D-glutamyl-meso-2,6-diaminopimeloyl-D-alanyl-D-alanine + UDP + H(+). Its pathway is cell wall biogenesis; peptidoglycan biosynthesis. Functionally, cell wall formation. Catalyzes the transfer of a GlcNAc subunit on undecaprenyl-pyrophosphoryl-MurNAc-pentapeptide (lipid intermediate I) to form undecaprenyl-pyrophosphoryl-MurNAc-(pentapeptide)GlcNAc (lipid intermediate II). In Bradyrhizobium sp. (strain ORS 278), this protein is UDP-N-acetylglucosamine--N-acetylmuramyl-(pentapeptide) pyrophosphoryl-undecaprenol N-acetylglucosamine transferase.